Reading from the N-terminus, the 129-residue chain is Small ribosomal subunit protein uS11 (129 aa).

This sequence belongs to the universal ribosomal protein uS11 family. As to quaternary structure, part of the 30S ribosomal subunit. Interacts with proteins S7 and S18. Binds to IF-3.

Functionally, located on the platform of the 30S subunit, it bridges several disparate RNA helices of the 16S rRNA. Forms part of the Shine-Dalgarno cleft in the 70S ribosome. This is Small ribosomal subunit protein uS11 from Limosilactobacillus fermentum (strain NBRC 3956 / LMG 18251) (Lactobacillus fermentum).